A 42-amino-acid polypeptide reads, in one-letter code: Hemoglobin subunit beta-A (42 aa).

The Globin domain maps to 2 to 42 (EWTDAERSAILSLWGKIDTDELGPALLARLXLVXXXTQRYF).

Belongs to the globin family. Heterotetramer of two alpha chains and two beta chains. In terms of tissue distribution, red blood cells.

Involved in oxygen transport from gills to the various peripheral tissues. The chain is Hemoglobin subunit beta-A from Catostomus clarkii (Desert sucker).